A 368-amino-acid polypeptide reads, in one-letter code: Epoxyqueuosine reductase QueH (368 aa).

[4Fe-4S] cluster is bound by residues Cys-6, Cys-7, Cys-87, and Cys-90. An intrachain disulfide couples Cys-174 to Cys-176.

Belongs to the QueH family.

It catalyses the reaction epoxyqueuosine(34) in tRNA + AH2 = queuosine(34) in tRNA + A + H2O. The protein operates within tRNA modification; tRNA-queuosine biosynthesis. Its function is as follows. Catalyzes the conversion of epoxyqueuosine (oQ) to queuosine (Q), which is a hypermodified base found in the wobble positions of tRNA(Asp), tRNA(Asn), tRNA(His) and tRNA(Tyr). This Helicobacter pylori (strain ATCC 700392 / 26695) (Campylobacter pylori) protein is Epoxyqueuosine reductase QueH.